Here is a 441-residue protein sequence, read N- to C-terminus: EMI domain-containing protein 1 (441 aa).

Positions 1-22 (MGGPRAWALLCLGLLLPGGGAA) are cleaved as a signal peptide. Positions 33-106 (RRNWCSYVVT…PGHSGVSCEE (74 aa)) constitute an EMI domain. 3 disulfides stabilise this stretch: cysteine 37-cysteine 96, cysteine 62-cysteine 68, and cysteine 95-cysteine 104. The O-linked (Fuc) threonine glycan is linked to threonine 42. N-linked (GlcNAc...) asparagine glycosylation is present at asparagine 51. Asparagine 136 carries an N-linked (GlcNAc...) asparagine glycan. Disordered regions lie at residues 162–371 (QPVP…KSHW) and 405–441 (SGAG…DERG). Pro residues-rich tracts occupy residues 163-184 (PVPP…PPAQ) and 222-231 (PPGPQGPPGS). The Collagen-like domain occupies 179–368 (GPPPAQGSPG…PGPKGDPGEK (190 aa)). Low complexity predominate over residues 232 to 243 (PGRAGAVGTPGE). Positions 244–264 (RGPPGPPGPPGPPGPPAPVGP) are enriched in pro residues. The span at 277-288 (LSNTFTETNNHW) shows a compositional bias: polar residues. Over residues 292–311 (PTGPPGPPGPMGPPGPPGPT) the composition is skewed to pro residues. Basic and acidic residues-rich tracts occupy residues 335–344 (PGEKGERGLR) and 359–371 (PGPK…KSHW).

As to quaternary structure, homo- or heteromers. In terms of processing, O-fucosylated at Thr-42 within the EMI domain by FUT10/POFUT3 and FUT11/POFUT4.

The protein resides in the secreted. The protein localises to the extracellular space. It localises to the extracellular matrix. In Homo sapiens (Human), this protein is EMI domain-containing protein 1 (EMID1).